Consider the following 425-residue polypeptide: Pre-mRNA-splicing factor RBM22 (425 aa).

Residues 159 to 186 (RNRPHICSFWVKGECKRGEECPYRHEKP) form a C3H1-type zinc finger. The RRM domain maps to 232–305 (TTLYIGGLGE…RRLNVKWGRS (74 aa)). Disordered regions lie at residues 304–331 (RSQAARGKGEKDGVTESGIRLEPVPGLP) and 384–425 (HTMD…HGGP). The segment covering 389-399 (MAPPVPPPMAL) has biased composition (pro residues).

Belongs to the SLT11 family. Component of the pre-catalytic and catalytic spliceosome complexes. Component of the postcatalytic spliceosome P complex.

It is found in the nucleus. The protein resides in the cytoplasm. Its function is as follows. Required for pre-mRNA splicing as component of the activated spliceosome. Involved in the first step of pre-mRNA splicing. Binds directly to the internal stem-loop (ISL) domain of the U6 snRNA and to the pre-mRNA intron near the 5' splice site during the activation and catalytic phases of the spliceosome cycle. Required for normal early embryogenesis. The chain is Pre-mRNA-splicing factor RBM22 (rbm22) from Danio rerio (Zebrafish).